The primary structure comprises 115 residues: U3-lycotoxin-Ls1k (115 aa).

Positions 1–20 (MKFELLFGVLLVTLFSYSSA) are cleaved as a signal peptide. Residues 21 to 44 (EMLDDFDQADEDELLSLIEKEEAR) constitute a propeptide that is removed on maturation. 4 disulfides stabilise this stretch: Cys-48–Cys-63, Cys-55–Cys-72, Cys-62–Cys-87, and Cys-74–Cys-85.

Belongs to the neurotoxin 19 (CSTX) family. 01 subfamily. In terms of tissue distribution, expressed by the venom gland.

It localises to the secreted. This chain is U3-lycotoxin-Ls1k, found in Lycosa singoriensis (Wolf spider).